Here is a 231-residue protein sequence, read N- to C-terminus: Probable amino-acid ABC transporter permease protein y4tG (231 aa).

Helical transmembrane passes span threonine 9–isoleucine 29, leucine 32–leucine 52, alanine 64–tyrosine 84, valine 86–isoleucine 106, tyrosine 161–leucine 181, and valine 196–valine 216. In terms of domain architecture, ABC transmembrane type-1 spans leucine 28 to arginine 217.

Belongs to the binding-protein-dependent transport system permease family. HisMQ subfamily.

It localises to the cell inner membrane. Its function is as follows. Probably part of the binding-protein-dependent transport system y4tEFGH for an amino acid. Probably responsible for the translocation of the substrate across the membrane. The protein is Probable amino-acid ABC transporter permease protein y4tG of Sinorhizobium fredii (strain NBRC 101917 / NGR234).